The following is a 67-amino-acid chain: Small ribosomal subunit protein eS17 (67 aa).

Belongs to the eukaryotic ribosomal protein eS17 family. In terms of assembly, part of the 30S ribosomal subunit.

This Thermococcus kodakarensis (strain ATCC BAA-918 / JCM 12380 / KOD1) (Pyrococcus kodakaraensis (strain KOD1)) protein is Small ribosomal subunit protein eS17.